Here is a 342-residue protein sequence, read N- to C-terminus: Ferredoxin--NADP reductase (342 aa).

Residues Cys-17, Asp-36, Gln-44, Tyr-49, Val-89, Phe-124, Asp-289, and Thr-330 each contribute to the FAD site.

Belongs to the ferredoxin--NADP reductase type 2 family. In terms of assembly, homodimer. FAD serves as cofactor.

The catalysed reaction is 2 reduced [2Fe-2S]-[ferredoxin] + NADP(+) + H(+) = 2 oxidized [2Fe-2S]-[ferredoxin] + NADPH. The protein is Ferredoxin--NADP reductase of Bradyrhizobium sp. (strain BTAi1 / ATCC BAA-1182).